We begin with the raw amino-acid sequence, 256 residues long: Enolase-phosphatase E1 (256 aa).

Residues Asp14 and Glu16 each contribute to the Mg(2+) site. Substrate-binding positions include Ser142 to Ser143 and Lys176. Asp201 is a Mg(2+) binding site.

The protein belongs to the HAD-like hydrolase superfamily. MasA/MtnC family. Monomer. Mg(2+) serves as cofactor.

It is found in the cytoplasm. It localises to the nucleus. It carries out the reaction 5-methylsulfanyl-2,3-dioxopentyl phosphate + H2O = 1,2-dihydroxy-5-(methylsulfanyl)pent-1-en-3-one + phosphate. It participates in amino-acid biosynthesis; L-methionine biosynthesis via salvage pathway; L-methionine from S-methyl-5-thio-alpha-D-ribose 1-phosphate: step 3/6. The protein operates within amino-acid biosynthesis; L-methionine biosynthesis via salvage pathway; L-methionine from S-methyl-5-thio-alpha-D-ribose 1-phosphate: step 4/6. Bifunctional enzyme that catalyzes the enolization of 2,3-diketo-5-methylthiopentyl-1-phosphate (DK-MTP-1-P) into the intermediate 2-hydroxy-3-keto-5-methylthiopentenyl-1-phosphate (HK-MTPenyl-1-P), which is then dephosphorylated to form the acireductone 1,2-dihydroxy-3-keto-5-methylthiopentene (DHK-MTPene). The protein is Enolase-phosphatase E1 of Drosophila sechellia (Fruit fly).